Consider the following 106-residue polypeptide: Large ribosomal subunit protein bL21 (106 aa).

This sequence belongs to the bacterial ribosomal protein bL21 family. In terms of assembly, part of the 50S ribosomal subunit. Contacts protein L20.

Its function is as follows. This protein binds to 23S rRNA in the presence of protein L20. The polypeptide is Large ribosomal subunit protein bL21 (Chlamydia caviae (strain ATCC VR-813 / DSM 19441 / 03DC25 / GPIC) (Chlamydophila caviae)).